We begin with the raw amino-acid sequence, 644 residues long: Threonine--tRNA ligase (644 aa).

The region spanning Met-1–Tyr-61 is the TGS domain. Positions Asp-241–Pro-532 are catalytic. 3 residues coordinate Zn(2+): Cys-333, His-384, and His-509.

Belongs to the class-II aminoacyl-tRNA synthetase family. In terms of assembly, homodimer. Requires Zn(2+) as cofactor.

The protein resides in the cytoplasm. It carries out the reaction tRNA(Thr) + L-threonine + ATP = L-threonyl-tRNA(Thr) + AMP + diphosphate + H(+). In terms of biological role, catalyzes the attachment of threonine to tRNA(Thr) in a two-step reaction: L-threonine is first activated by ATP to form Thr-AMP and then transferred to the acceptor end of tRNA(Thr). Also edits incorrectly charged L-seryl-tRNA(Thr). The chain is Threonine--tRNA ligase from Nitratidesulfovibrio vulgaris (strain ATCC 29579 / DSM 644 / CCUG 34227 / NCIMB 8303 / VKM B-1760 / Hildenborough) (Desulfovibrio vulgaris).